An 852-amino-acid chain; its full sequence is Zinc finger protein 484 (852 aa).

One can recognise a KRAB domain in the interval 8-78 (VSFKDVTVDF…DGEIPSQSRP (71 aa)). K156 is covalently cross-linked (Glycyl lysine isopeptide (Lys-Gly) (interchain with G-Cter in SUMO2)). The segment at 223–245 (CECNQCGKPLHHKQALIQQQKIH) adopts a C2H2-type 1; degenerate zinc-finger fold. The C2H2-type 2; degenerate zinc-finger motif lies at 279–301 (HECHECEAVFTQKSQLDGSQRVY). The C2H2-type 3; degenerate zinc-finger motif lies at 328 to 350 (YKCSDYGRAFIQKSDLFRCQRIH). The C2H2-type 4; degenerate zinc finger occupies 356–378 (YEYSECEKNLPQNSNLNIHKKIH). 15 consecutive C2H2-type zinc fingers follow at residues 384–406 (FECT…QKIH), 412–434 (YVCT…ERIH), 440–462 (YECS…QRIH), 468–490 (FICS…QKIH), 496–518 (YICT…QKIH), 524–546 (YKCS…QKCH), 552–574 (YECS…QRIH), 580–602 (YVCT…ERIH), 608–630 (YECS…QQIH), 636–658 (YRCA…QKIH), 664–686 (YKCS…QQSH), 692–714 (YECS…QRIH), 720–742 (YICN…RRIH), 748–770 (YECS…HRIH), and 776–798 (YICA…QKIH). A Glycyl lysine isopeptide (Lys-Gly) (interchain with G-Cter in SUMO2) cross-link involves residue K816.

This sequence belongs to the krueppel C2H2-type zinc-finger protein family.

It localises to the nucleus. Its function is as follows. May be involved in transcriptional regulation. The chain is Zinc finger protein 484 (ZNF484) from Homo sapiens (Human).